The primary structure comprises 689 residues: Bifunctional protein GAL10 (689 aa).

The interval 1-345 (MSYILVTGGA…TTKNPFGFQI (345 aa)) is galactowaldenase. 3 to 34 (YILVTGGAGYIGSHTVVELVNNGYNVVVVDNL) provides a ligand contact to NAD(+). Positions 346-689 (NNYSWTKFDS…SYTIYRFENF (344 aa)) are mutarotase. H534 (for mutarotase activity) is an active-site residue.

This sequence in the N-terminal section; belongs to the NAD(P)-dependent epimerase/dehydratase family. The protein in the C-terminal section; belongs to the aldose epimerase family. NAD(+) is required as a cofactor.

The enzyme catalyses UDP-alpha-D-glucose = UDP-alpha-D-galactose. It catalyses the reaction alpha-D-glucose = beta-D-glucose. The protein operates within carbohydrate metabolism; galactose metabolism. It participates in carbohydrate metabolism; hexose metabolism. Mutarotase converts alpha-aldose to the beta-anomer. It is active on D-glucose, L-arabinose, D-xylose, D-galactose, maltose and lactose. The protein is Bifunctional protein GAL10 (GAL10) of Pachysolen tannophilus (Yeast).